Reading from the N-terminus, the 237-residue chain is Uridylate kinase (237 aa).

Residue 11–14 (KLSG) participates in ATP binding. Residue Gly-53 participates in UMP binding. Residues Gly-54 and Arg-58 each coordinate ATP. Residues Asp-73 and 134-141 (TGNPFFTT) contribute to the UMP site. Thr-161, Tyr-167, and Asp-170 together coordinate ATP.

The protein belongs to the UMP kinase family. In terms of assembly, homohexamer.

It is found in the cytoplasm. It catalyses the reaction UMP + ATP = UDP + ADP. The protein operates within pyrimidine metabolism; CTP biosynthesis via de novo pathway; UDP from UMP (UMPK route): step 1/1. With respect to regulation, inhibited by UTP. Functionally, catalyzes the reversible phosphorylation of UMP to UDP. The protein is Uridylate kinase of Nitrosomonas europaea (strain ATCC 19718 / CIP 103999 / KCTC 2705 / NBRC 14298).